The following is a 517-amino-acid chain: General transcription factor IIF subunit 1 (517 aa).

Ala-2 bears the N-acetylalanine mark. At Thr-156 the chain carries Phosphothreonine. Residues 178–466 (QQRRLKDQDQ…DAVRRYLTRK (289 aa)) are disordered. Residues Ser-217, Ser-218, Ser-221, and Ser-224 each carry the phosphoserine modification. Positions 232 to 251 (PKAKKKAPLAKGGRKKKKKK) are enriched in basic residues. 2 stretches are compositionally biased toward acidic residues: residues 255–270 (DEAFEDSDDGDFEGQE) and 303–325 (EQSDSSEESEEEKPPEEDKEEEE). Thr-331 bears the Phosphothreonine mark. Positions 343-355 (EESDSSEESDIDS) are enriched in acidic residues. The span at 364-374 (AKKKTPPKRER) shows a compositional bias: basic residues. 4 positions are modified to phosphoserine: Ser-377, Ser-380, Ser-381, and Ser-385. A compositionally biased stretch (low complexity) spans 377–391 (SGGSSRGNSRPGTPS). Thr-389 is subject to Phosphothreonine. Ser-391 is modified (phosphoserine). Lys-407 carries the N6-acetyllysine modification. Positions 428–452 (GPQSLSGKSTPQPPSGKTTPNSGDV) are enriched in polar residues. 3 positions are modified to phosphoserine: Ser-431, Ser-433, and Ser-436. Thr-437 and Thr-446 each carry phosphothreonine. Phosphoserine is present on Ser-449. Positions 503, 512, and 517 each coordinate Zn(2+).

This sequence belongs to the TFIIF alpha subunit family. As to quaternary structure, heterodimer of an alpha and a beta subunit. Interacts with GTF2F2, CTDP1, TAF6/TAFII80 and URI1. Interacts with GTF2B (via C-terminus and preferentially via acetylated form); this interaction prevents binding of GTF2B to GTF2F2. Part of TBP-based Pol II pre-initiation complex (PIC), in which Pol II core assembles with general transcription factors and other specific initiation factors including GTF2E1, GTF2E2, GTF2F1, GTF2F2, TCEA1, ERCC2, ERCC3, GTF2H2, GTF2H3, GTF2H4, GTF2H5, GTF2A1, GTF2A2, GTF2B and TBP; this large multi-subunit PIC complex mediates DNA unwinding and targets Pol II core to the transcription start site where the first phosphodiester bond forms. Post-translationally, phosphorylated on Ser and other residues by TAF1 and casein kinase II-like kinases.

It localises to the nucleus. In terms of biological role, TFIIF is a general transcription initiation factor that binds to RNA polymerase II and helps to recruit it to the initiation complex in collaboration with TFIIB. It promotes transcription elongation. The sequence is that of General transcription factor IIF subunit 1 (GTF2F1) from Homo sapiens (Human).